The sequence spans 498 residues: ATP synthase subunit beta, chloroplastic (498 aa).

172–179 (GGAGVGKT) lines the ATP pocket.

The protein belongs to the ATPase alpha/beta chains family. F-type ATPases have 2 components, CF(1) - the catalytic core - and CF(0) - the membrane proton channel. CF(1) has five subunits: alpha(3), beta(3), gamma(1), delta(1), epsilon(1). CF(0) has four main subunits: a(1), b(1), b'(1) and c(9-12).

It localises to the plastid. The protein localises to the chloroplast thylakoid membrane. It catalyses the reaction ATP + H2O + 4 H(+)(in) = ADP + phosphate + 5 H(+)(out). Its function is as follows. Produces ATP from ADP in the presence of a proton gradient across the membrane. The catalytic sites are hosted primarily by the beta subunits. In Brasenia schreberi (Water shield), this protein is ATP synthase subunit beta, chloroplastic.